Consider the following 418-residue polypeptide: Synaptotagmin-15 (418 aa).

Residues 1–4 (MAEQ) are Extracellular-facing. A helical; Signal-anchor for type III membrane protein membrane pass occupies residues 5-27 (LAFLIGGIIGGLLLLIGVSCCLW). Topologically, residues 28 to 418 (RRFCATFTYE…WHALCRPTEP (391 aa)) are cytoplasmic. C2 domains follow at residues 144 to 261 (CLGR…HRII) and 275 to 396 (EFGD…EHWG).

Belongs to the synaptotagmin family. In terms of assembly, homodimer. Isoform 1 and isoform 2 are expressed in heart, lung, skeletal muscle and testis; not detected in brain, liver and kidney. Isoform 1 is expressed in spleen.

The protein localises to the membrane. Functionally, may be involved in the trafficking and exocytosis of secretory vesicles in non-neuronal tissues. This chain is Synaptotagmin-15 (Syt15), found in Mus musculus (Mouse).